Consider the following 1222-residue polypeptide: Alpha-mannosidase D (1222 aa).

The signal sequence occupies residues 1 to 21 (MESSKFVKIIWVFGIWILVFT). Residues 22–1170 (FLIIYNNYDY…KYNRPNHLAL (1149 aa)) lie on the Extracellular side of the membrane. Zn(2+)-binding residues include histidine 71 and aspartate 73. The N-linked (GlcNAc...) asparagine glycan is linked to asparagine 175. Positions 185 and 453 each coordinate Zn(2+). The Nucleophile role is filled by aspartate 185. 13 N-linked (GlcNAc...) asparagine glycosylation sites follow: asparagine 492, asparagine 496, asparagine 547, asparagine 551, asparagine 566, asparagine 613, asparagine 665, asparagine 768, asparagine 785, asparagine 952, asparagine 981, asparagine 1069, and asparagine 1084. The span at 493 to 549 (KSNNKTNNNNNNNNKNNNNNNNNNNNNNNNLKNTNSISTTGSSSSSGSGSSNNNNNT) shows a compositional bias: low complexity. Residues 493 to 554 (KSNNKTNNNN…NNNNTVNKSE (62 aa)) are disordered. A helical transmembrane segment spans residues 1171 to 1191 (ILSLSIGIPAGILIIVIALVV). At 1192–1222 (TYKKRKNRKTLTSSNSSSNLIQQEDQTDYSP) the chain is on the cytoplasmic side. The span at 1202-1211 (LTSSNSSSNL) shows a compositional bias: low complexity. A disordered region spans residues 1202 to 1222 (LTSSNSSSNLIQQEDQTDYSP). Positions 1212–1222 (IQQEDQTDYSP) are enriched in polar residues.

It belongs to the glycosyl hydrolase 38 family. It depends on Zn(2+) as a cofactor.

The protein localises to the membrane. It carries out the reaction Hydrolysis of terminal, non-reducing alpha-D-mannose residues in alpha-D-mannosides.. The polypeptide is Alpha-mannosidase D (manD) (Dictyostelium discoideum (Social amoeba)).